Consider the following 755-residue polypeptide: MGECPVNHTKSANVAGGGTRNIDWWPNQLRLNILRQHTAASDPFHKEFNYAAAFKSLDYNALKKDLTDLMTNSQDWWPADFGHYGGLFIRMAWHSAGTYRVFDGRGGGGQGQQRFAPLNSWPDNVSLDKARRLLWPIKQKYGNKISWADLMLLTGNVALESMGFKTFGFAGGRPDTWEADESAYWGGETTWLGNEARYAHGQEGIAGKGIVSGDESKKNHTDIHNRDLESPLAAAHMGLIYVNPEGPDGNPDPVAAARDIRVTFGRMAMDDEETVALIAGGHTFGKTHGAAPADNVGAEPEAASIEQQGFGWSNKYGSGKGPDTITSGLEVIWTKNPTKWTNQFFEYLFKYEWELTKSPAGANQWVAKNAEPFIPDAYDPNKKHLPRMLTTDLSLRFDPGFEKISRRFLEHTDQFADAFARAWFKLLHRDMGPRSRWLGPEIPSEVLLWEDPLPPLDHPVIDNNDIAAIKREILATGLAPQKLISTAWASASTFRGSDKRGGANGARIRLAPQKDWKVNNPAQLAEVLGALEDVQKRFNEQATGGKKVSLADVIVLGGVAALEQAAGVSVPFTPGRTDASQEQTDVHSFEHLEPYADGFRNYGHGNDRVKTEQYLVDRAHLLTLTAPELAVLVGGLRVLGANYDGSDHGVFTAQPGKLTNDFFVNLLDPNTEWTNVDGKGEVFEGKDRATGQKKWTGTRADLIFGSHSELRAIAEVYGSADGQEKFVKDFVAAWDKVMNLDRFDLEQGAGSSPKL.

Positions 93–241 (WHSAGTYRVF…LAAAHMGLIY (149 aa)) form a cross-link, tryptophyl-tyrosyl-methioninium (Trp-Tyr) (with M-267). His-94 acts as the Proton acceptor in catalysis. The segment at residues 241–267 (YVNPEGPDGNPDPVAAARDIRVTFGRM) is a cross-link (tryptophyl-tyrosyl-methioninium (Tyr-Met) (with W-93)). Residue His-282 participates in heme b binding.

The protein belongs to the peroxidase family. Peroxidase/catalase subfamily. In terms of assembly, homodimer or homotetramer. The cofactor is heme b. Post-translationally, formation of the three residue Trp-Tyr-Met cross-link is important for the catalase, but not the peroxidase activity of the enzyme.

It localises to the cytoplasm. The enzyme catalyses H2O2 + AH2 = A + 2 H2O. It carries out the reaction 2 H2O2 = O2 + 2 H2O. Bifunctional enzyme with both catalase and broad-spectrum peroxidase activity. This Podospora anserina (strain S / ATCC MYA-4624 / DSM 980 / FGSC 10383) (Pleurage anserina) protein is Catalase-peroxidase.